The primary structure comprises 638 residues: Chaperone protein DnaK (638 aa).

T198 is subject to Phosphothreonine; by autocatalysis. The tract at residues 600–638 (KTQTEGGAQPGAEADGDTGAKGGEKVVDADFEEVKDDKK) is disordered. Residues 628-638 (ADFEEVKDDKK) show a composition bias toward acidic residues.

The protein belongs to the heat shock protein 70 family.

Functionally, acts as a chaperone. This is Chaperone protein DnaK from Geobacter metallireducens (strain ATCC 53774 / DSM 7210 / GS-15).